A 662-amino-acid chain; its full sequence is Transketolase (662 aa).

Residue His-28 coordinates substrate. Residues His-68 and 115–117 contribute to the thiamine diphosphate site; that span reads GPL. Position 156 (Asp-156) interacts with Mg(2+). Residues Gly-157 and Asn-186 each contribute to the thiamine diphosphate site. Residues Asn-186 and Ile-188 each contribute to the Mg(2+) site. Substrate contacts are provided by His-261, Arg-356, and Ser-383. Thiamine diphosphate is bound at residue His-261. Glu-410 (proton donor) is an active-site residue. Phe-436 provides a ligand contact to thiamine diphosphate. Substrate is bound by residues His-460, Asp-468, and Arg-519.

This sequence belongs to the transketolase family. In terms of assembly, homodimer. Requires Mg(2+) as cofactor. Ca(2+) serves as cofactor. Mn(2+) is required as a cofactor. It depends on Co(2+) as a cofactor. The cofactor is thiamine diphosphate.

It carries out the reaction D-sedoheptulose 7-phosphate + D-glyceraldehyde 3-phosphate = aldehydo-D-ribose 5-phosphate + D-xylulose 5-phosphate. It functions in the pathway carbohydrate biosynthesis; Calvin cycle. The protein operates within carbohydrate degradation; pentose phosphate pathway. Its function is as follows. Catalyzes the transfer of a two-carbon ketol group from a ketose donor to an aldose acceptor, via a covalent intermediate with the cofactor thiamine pyrophosphate. In Staphylococcus epidermidis (strain ATCC 35984 / DSM 28319 / BCRC 17069 / CCUG 31568 / BM 3577 / RP62A), this protein is Transketolase (tkt).